Reading from the N-terminus, the 253-residue chain is Imidazole glycerol phosphate synthase subunit HisF (253 aa).

Residues Asp-11 and Asp-130 contribute to the active site.

This sequence belongs to the HisA/HisF family. As to quaternary structure, heterodimer of HisH and HisF.

The protein localises to the cytoplasm. The catalysed reaction is 5-[(5-phospho-1-deoxy-D-ribulos-1-ylimino)methylamino]-1-(5-phospho-beta-D-ribosyl)imidazole-4-carboxamide + L-glutamine = D-erythro-1-(imidazol-4-yl)glycerol 3-phosphate + 5-amino-1-(5-phospho-beta-D-ribosyl)imidazole-4-carboxamide + L-glutamate + H(+). It participates in amino-acid biosynthesis; L-histidine biosynthesis; L-histidine from 5-phospho-alpha-D-ribose 1-diphosphate: step 5/9. IGPS catalyzes the conversion of PRFAR and glutamine to IGP, AICAR and glutamate. The HisF subunit catalyzes the cyclization activity that produces IGP and AICAR from PRFAR using the ammonia provided by the HisH subunit. This Geotalea uraniireducens (strain Rf4) (Geobacter uraniireducens) protein is Imidazole glycerol phosphate synthase subunit HisF.